A 273-amino-acid polypeptide reads, in one-letter code: 2,3,4,5-tetrahydropyridine-2,6-dicarboxylate N-succinyltransferase (273 aa).

Arg-104 and Asp-141 together coordinate substrate.

This sequence belongs to the transferase hexapeptide repeat family. As to quaternary structure, homotrimer.

It localises to the cytoplasm. The enzyme catalyses (S)-2,3,4,5-tetrahydrodipicolinate + succinyl-CoA + H2O = (S)-2-succinylamino-6-oxoheptanedioate + CoA. Its pathway is amino-acid biosynthesis; L-lysine biosynthesis via DAP pathway; LL-2,6-diaminopimelate from (S)-tetrahydrodipicolinate (succinylase route): step 1/3. The protein is 2,3,4,5-tetrahydropyridine-2,6-dicarboxylate N-succinyltransferase of Neisseria meningitidis serogroup B (strain ATCC BAA-335 / MC58).